The following is a 757-amino-acid chain: Probable phospholipase C20G8.02, mitochondrial (757 aa).

A mitochondrion-targeting transit peptide spans 1–13 (MILYIVLPFYVRT). A disordered region spans residues 289-330 (ESNSKPSTPVPTEELTSTTLLNDSSDPSDNFTPSNTESTIDL). Residues 302–329 (ELTSTTLLNDSSDPSDNFTPSNTESTID) show a composition bias toward polar residues. Ser-524 is an active-site residue. The region spanning 547-757 (LDFPVANFFA…LAHFILTQLL (211 aa)) is the DDHD domain.

The protein belongs to the PA-PLA1 family.

It localises to the mitochondrion. In terms of biological role, probable phospholipase that hydrolyzes phosphatidic acid. This chain is Probable phospholipase C20G8.02, mitochondrial, found in Schizosaccharomyces pombe (strain 972 / ATCC 24843) (Fission yeast).